The chain runs to 167 residues: Peroxiredoxin Pen c 3 (167 aa).

Residues 3–167 (LKAGDSFPEG…SRADHVLKQL (165 aa)) enclose the Thioredoxin domain. The active-site Cysteine sulfenic acid (-SOH) intermediate is cysteine 60.

The protein belongs to the peroxiredoxin family. Prx5 subfamily. Homodimer; disulfide-linked, upon oxidation.

The enzyme catalyses a hydroperoxide + [thioredoxin]-dithiol = an alcohol + [thioredoxin]-disulfide + H2O. Its function is as follows. Thiol-specific peroxidase that catalyzes the reduction of hydrogen peroxide and organic hydroperoxides to water and alcohols, respectively. Plays a role in cell protection against oxidative stress by detoxifying peroxides and as sensor of hydrogen peroxide-mediated signaling events. In Penicillium citrinum, this protein is Peroxiredoxin Pen c 3.